Here is a 1077-residue protein sequence, read N- to C-terminus: Histone deacetylase 4 (1077 aa).

Residues 66 to 169 (REQQLQQELL…GKESAVASTE (104 aa)) adopt a coiled-coil conformation. An interaction with MEF2A region spans residues 117-312 (MLAMKHQQEL…NSSSGNVSTE (196 aa)). A compositionally biased stretch (basic and acidic residues) spans 132-162 (KLERHRQEQELEKQHREQKLQQLKNKEKGKE). 3 disordered regions span residues 132-167 (KLER…AVAS), 204-225 (KTQH…ASYN), and 239-327 (PLRK…AETS). Polar residues predominate over residues 205–224 (TQHSSLDQSSPPQSGVSASY). Ser-209 carries the phosphoserine modification. Ser-245 carries the phosphoserine; by CaMK4 and SIK1 modification. Over residues 258 to 273 (KVAERRSSPLLRRKDG) the composition is skewed to basic and acidic residues. Over residues 289-310 (SACSSAPGSGPSSPNSSSGNVS) the composition is skewed to low complexity. The PxLPxI/L motif; mediates interaction with ANKRA2 and 14-3-3 proteins motif lies at 348–353 (PSLPNI). Phosphoserine is present on Ser-349. Phosphoserine; by CaMK4 and SIK1 is present on Ser-466. 3 disordered regions span residues 508–530 (SKPS…ELRE), 542–582 (RLPG…RPAT), and 623–646 (RPLS…EPPT). Positions 515–530 (RQPESHPEETEEELRE) are enriched in basic and acidic residues. Lys-557 participates in a covalent cross-link: Glycyl lysine isopeptide (Lys-Gly) (interchain with G-Cter in SUMO). 3 positions are modified to phosphoserine: Ser-563, Ser-630, and Ser-631. Over residues 627-639 (RAQSSPASATFPM) the composition is skewed to polar residues. A histone deacetylase region spans residues 653–1077 (GLVYDTLMLK…EEPMEEEPPL (425 aa)). Cys-665, Cys-667, His-673, and Cys-744 together coordinate Zn(2+). His-796 is an active-site residue. Residues 1044–1077 (EEAETVTAMASLSVGVKPAEKRSEEEPMEEEPPL) carry the Nuclear export signal motif. The interval 1052–1077 (MASLSVGVKPAEKRSEEEPMEEEPPL) is disordered.

Belongs to the histone deacetylase family. HD type 2 subfamily. In terms of assembly, homodimer. Homodimerization via its N-terminal domain. Interacts with HDAC7. Interacts with MEF2A, MEF2C, MEF2D, MORC2 and NR2C1. Interacts with a 14-3-3 chaperone proteins in a phosphorylation dependent manner. Interacts with 14-3-3 protein YWHAB. Interacts with KDM5B and AHRR. Interacts with BTBD14B. Interacts with MYOCD. Interacts (via PxLPxI/L motif) with ANKRA2 (via ankyrin repeats). Interacts with CUL7 (as part of the 3M complex); negatively regulated by ANKRA2. Interacts with EP300 in the presence of TFAP2C. Interacts with HSPA1A and HSPA1B leading to their deacetylation at 'Lys-77'. Interacts with ZBTB7B; the interaction allows the recruitment of HDAC4 on CD8 loci for deacetylation and possible inhibition of CD8 genes expression. Interacts with DHX36. Interacts with SIK3; this interaction leads to HDAC4 retention in the cytoplasm. Post-translationally, phosphorylated by CaMK4 at Ser-245, Ser-466 and Ser-630. Phosphorylation at other residues by CaMK2D is required for the interaction with 14-3-3. Phosphorylation at Ser-349, within the PxLPxI/L motif, impairs the binding of ANKRA2 but generates a high-affinity docking site for 14-3-3. In terms of processing, sumoylation on Lys-557 is promoted by the E3 SUMO-protein ligase RANBP2, and prevented by phosphorylation by CaMK4.

It localises to the nucleus. Its subcellular location is the cytoplasm. The enzyme catalyses N(6)-acetyl-L-lysyl-[histone] + H2O = L-lysyl-[histone] + acetate. Its function is as follows. Responsible for the deacetylation of lysine residues on the N-terminal part of the core histones (H2A, H2B, H3 and H4). Histone deacetylation gives a tag for epigenetic repression and plays an important role in transcriptional regulation, cell cycle progression and developmental events. Histone deacetylases act via the formation of large multiprotein complexes. Involved in muscle maturation via its interaction with the myocyte enhancer factors such as MEF2A, MEF2C and MEF2D. Deacetylates HSPA1A and HSPA1B at 'Lys-77' leading to their preferential binding to co-chaperone STUB1. The sequence is that of Histone deacetylase 4 (Hdac4) from Rattus norvegicus (Rat).